We begin with the raw amino-acid sequence, 181 residues long: Inner membrane-spanning protein YciB (181 aa).

5 helical membrane-spanning segments follow: residues 19–39, 50–70, 80–100, 118–138, and 148–168; these read FFDI…QLIA, MHLI…IFHD, IVYA…KPIL, LTWY…YVAF, and FKVF…VVYL.

This sequence belongs to the YciB family.

It localises to the cell inner membrane. In terms of biological role, plays a role in cell envelope biogenesis, maintenance of cell envelope integrity and membrane homeostasis. The sequence is that of Inner membrane-spanning protein YciB from Shewanella amazonensis (strain ATCC BAA-1098 / SB2B).